A 193-amino-acid polypeptide reads, in one-letter code: MLANLDRYKIVLASNSPRRKELMTGLGVDYVVKTLPDVDESYPDTLQGEEIPLFIAREKAAAYQSMIGPEELLITADTIVWHEGKALGKPVGRQDAIEMLRSLSGKSHQVITGVCLTTREWQKCFAAVTDVRFAILDEDEIAYYVDHYQPMDKAGSYGVQEWIGFVGVESISGSYFNVMGLPIQKLYRELKQL.

Asp-77 acts as the Proton acceptor in catalysis.

Belongs to the Maf family. YhdE subfamily. A divalent metal cation is required as a cofactor.

It is found in the cytoplasm. It catalyses the reaction dTTP + H2O = dTMP + diphosphate + H(+). The enzyme catalyses UTP + H2O = UMP + diphosphate + H(+). Its function is as follows. Nucleoside triphosphate pyrophosphatase that hydrolyzes dTTP and UTP. May have a dual role in cell division arrest and in preventing the incorporation of modified nucleotides into cellular nucleic acids. The chain is dTTP/UTP pyrophosphatase from Bacteroides fragilis (strain ATCC 25285 / DSM 2151 / CCUG 4856 / JCM 11019 / LMG 10263 / NCTC 9343 / Onslow / VPI 2553 / EN-2).